A 212-amino-acid polypeptide reads, in one-letter code: Thymidylate kinase (212 aa).

An ATP-binding site is contributed by 10 to 17 (GIDGCGKT).

The protein belongs to the thymidylate kinase family.

The catalysed reaction is dTMP + ATP = dTDP + ADP. In terms of biological role, phosphorylation of dTMP to form dTDP in both de novo and salvage pathways of dTTP synthesis. The polypeptide is Thymidylate kinase (Prochlorococcus marinus (strain MIT 9301)).